The chain runs to 496 residues: Nucleolar and spindle-associated protein 1-B (496 aa).

3 disordered regions span residues 44–206, 250–294, and 338–496; these read YPES…HEAH, TPVS…STAN, and KSSS…VPVK. The segment covering 56–69 has biased composition (polar residues); that stretch reads GCTSLTDTDELNSS. Residues 121 to 134 are compositionally biased toward basic and acidic residues; the sequence is TQDKDCLESKKKEV. The span at 150–159 shows a compositional bias: polar residues; that stretch reads QDTSKQNNSE. Over residues 261-281 the composition is skewed to low complexity; it reads SRLSLLSPLPRTTGASPSRTP. Polar residues-rich tracts occupy residues 376 to 396 and 403 to 423; these read NTTIQPSPAITESPCQQNKAN and AQNTETPNTNKKGSFDLQASL. Over residues 447 to 459 the composition is skewed to low complexity; sequence SGSNSNVSVLKNN. Basic and acidic residues predominate over residues 467–485; it reads TREERRKQHELDRKGKRDQ.

This sequence belongs to the NUSAP family. Interacts with DNA, microtubules, ipo7, kpna2 and kpnb1. Microtubule stabilization is inhibited by ipo7 and kpna2, while microtubule bundling is inhibited by kpnb1. Active GTP-bound ran causes dissociation of ipo7 and kpnb1.

The protein resides in the cytoplasm. It localises to the nucleus. Its subcellular location is the cytoskeleton. It is found in the spindle. Functionally, microtubule-associated protein with the capacity to bundle and stabilize microtubules. May associate with chromosomes and promote the organization of meiotic or mitotic spindle microtubules around them. The polypeptide is Nucleolar and spindle-associated protein 1-B (nusap1-b) (Xenopus laevis (African clawed frog)).